The sequence spans 256 residues: Omega-amidase YafV (256 aa).

Residues 4-234 (LKLTLLQQPL…AAQLDAELSL (231 aa)) enclose the CN hydrolase domain. Glu-42 functions as the Proton acceptor in the catalytic mechanism. The active site involves Lys-107. The active-site Nucleophile is the Cys-141.

It belongs to the carbon-nitrogen hydrolase superfamily. NIT1/NIT2 family.

It catalyses the reaction a monoamide of a dicarboxylate + H2O = a dicarboxylate + NH4(+). Hydrolyzes alpha-ketoglutaramate (a-KGM) to alpha-ketoglutarate (alpha-KG) and ammonia (specific activity 21 umol/min/mg), has very weak activity on L-glutamine, and no activity on deaminated glutathione (dGSH) or glutathione. May function as a metabolite repair enzyme. This chain is Omega-amidase YafV, found in Yersinia enterocolitica.